The following is a 151-amino-acid chain: Caveolin-3 (151 aa).

Topologically, residues 1–83 are cytoplasmic; it reads MMAEERTDLE…RLLSTLLGVP (83 aa). Lys-38 participates in a covalent cross-link: Glycyl lysine isopeptide (Lys-Gly) (interchain with G-Cter in SUMO3). Residues 64-114 are required for interaction with DAG1; sequence TFTVSKYWCYRLLSTLLGVPLALLWGFLFACISFCHIWAVVPCIKSYLIEI. Residues 84-104 constitute an intramembrane region (helical); sequence LALLWGFLFACISFCHIWAVV. The Cytoplasmic portion of the chain corresponds to 105 to 151; it reads PCIKSYLIEIQCISHIYSLCIRTFCNPVFAALGQVCSNIKVMLRKEV.

It belongs to the caveolin family. As to quaternary structure, homooligomer. Interacts with DYSF. Interacts with DLG1 and KCNA5; forms a ternary complex. Interacts with DAG1 (via its C-terminal); the interaction prevents binding of DAG1 with DMD. Interacts with TRIM72. Interacts with MUSK; may regulate MUSK signaling. Interacts with POPDC1. Interacts with CAVIN1, CAVIN2 and CAVIN4. Post-translationally, sumoylation with SUMO3 by PIAS4 may reduce agonist-induced internalization and desensitization of adrenergic receptor ABRD2. Expressed specifically in skeletal muscle and heart.

It is found in the golgi apparatus membrane. Its subcellular location is the cell membrane. It localises to the membrane. The protein resides in the caveola. The protein localises to the sarcolemma. Its function is as follows. May act as a scaffolding protein within caveolar membranes. Interacts directly with G-protein alpha subunits and can functionally regulate their activity. May also regulate voltage-gated potassium channels. Plays a role in the sarcolemma repair mechanism of both skeletal muscle and cardiomyocytes that permits rapid resealing of membranes disrupted by mechanical stress. Mediates the recruitment of CAVIN2 and CAVIN3 proteins to the caveolae. This is Caveolin-3 (CAV3) from Sus scrofa (Pig).